The primary structure comprises 175 residues: S-fimbrial protein subunit SfaG (175 aa).

An N-terminal signal peptide occupies residues 1–27; that stretch reads MVKDIIKTVTFSCMLAGSMFVTCHVCA. C43 and C83 are disulfide-bonded.

Belongs to the fimbrial protein family.

Its subcellular location is the fimbrium. In terms of biological role, fimbriae (also called pili), polar filaments radiating from the surface of the bacterium to a length of 0.5-1.5 micrometers and numbering 100-300 per cell, enable bacteria to colonize the epithelium of specific host organs. Its function is as follows. A minor fimbrial subunit. This protein is necessary for full expression of S-specific binding. S-fimbrial adhesins enable pathogenic E.coli causing urinary-tract infections or newborn meningitis to attach to glycoproteins terminating with alpha-sialic acid-(2-3)-beta-Gal. This chain is S-fimbrial protein subunit SfaG (sfaG), found in Escherichia coli O6:K15:H31 (strain 536 / UPEC).